The following is a 656-amino-acid chain: Receptor-type tyrosine-protein phosphatase R (656 aa).

The first 23 residues, 1–23, serve as a signal peptide directing secretion; it reads MRRAVGFPALCLLLNLHAAGCFS. Ser-23 is a glycosylation site (O-linked (Xyl...) (chondroitin sulfate) serine). Residues 25 to 225 lie on the Extracellular side of the membrane; it reads NNDHFLAIRQ…HEADKIWSKE (201 aa). N-linked (GlcNAc...) asparagine glycosylation occurs at Asn-128. The helical transmembrane segment at 226 to 248 threads the bilayer; the sequence is GFYAVVIFLSIFIIIVTCLMIIY. Topologically, residues 249-656 are cytoplasmic; sequence RLKERLQLSF…ESRLSPETVQ (408 aa). A Phosphoserine modification is found at Ser-271. Ser-338 carries the post-translational modification Phosphoserine; by PKA. The 255-residue stretch at 392 to 646 folds into the Tyrosine-protein phosphatase domain; sequence LQSEFMEIPM…EFVHHALCLF (255 aa). Substrate-binding positions include Asp-553, 587 to 593, and Gln-631; that span reads CSAGIGR. Cys-587 functions as the Phosphocysteine intermediate in the catalytic mechanism.

This sequence belongs to the protein-tyrosine phosphatase family. Receptor class 7 subfamily. Interacts with MAPKs. Widely expressed in the brain, most abundant in cerebellum, midbrain, cerebral cortex and hippocampus. Also expressed in heart and skeletal muscle.

The protein localises to the cytoplasm. Its subcellular location is the cell membrane. The catalysed reaction is O-phospho-L-tyrosyl-[protein] + H2O = L-tyrosyl-[protein] + phosphate. Sequesters mitogen-activated protein kinases (MAPKs) such as MAPK1, MAPK3 and MAPK14 in the cytoplasm in an inactive form. The MAPKs bind to a dephosphorylated kinase interacting motif, phosphorylation of which by the protein kinase A complex releases the MAPKs for activation and translocation into the nucleus. This is Receptor-type tyrosine-protein phosphatase R (Ptprr) from Rattus norvegicus (Rat).